The chain runs to 315 residues: Long form salivary protein D7L1 (315 aa).

A signal peptide spans 1–18 (MIIVAVLLSFLAHLLVQA). 2 disulfide bridges follow: Cys37–Cys73 and Cys69–Cys128. Trp55 contacts thromboxane A2. Trp58 serves as a coordination point for leukotriene C4. Residue Tyr70 coordinates thromboxane A2. Residues Gly152 and Lys170 each coordinate leukotriene C4. Lys170 is a thromboxane A2 binding site. 2 disulfide bridges follow: Cys178–Cys211 and Cys252–Cys263.

It belongs to the PBP/GOBP family. Distal-lateral and median lobes of female salivary gland (at protein level). Not detected in male salivary gland (at protein level). Expressed in female salivary gland. Not detected in female carcass without salivary glands. Expressed in male salivary gland and other tissues.

It localises to the secreted. In terms of biological role, modulates blood feeding of female mosquitoes on vertebrate species by binding and sequestering different mediators involved in the host response. Binds leukotriene C4, leukotriene D4, leukotriene E4 and stable analogs of thromboxane A2, U-46619 and carbocyclic TXA2. Binds weakly prostaglandins: PGD2, PGE2 and PGF2alpha. Does not bind leukotriene B4, biogenic amines, ADP, platelet activating phospholipid derivative PAF and arachidonic acid. Inhibits agonist-induced smooth muscle contraction. Inhibits platelet aggregation induced by low concentrations of collagen in thromboxane A2-dependent manner. This Anopheles stephensi (Indo-Pakistan malaria mosquito) protein is Long form salivary protein D7L1.